The primary structure comprises 122 residues: Large ribosomal subunit protein uL14 (122 aa).

The protein belongs to the universal ribosomal protein uL14 family. As to quaternary structure, part of the 50S ribosomal subunit. Forms a cluster with proteins L3 and L19. In the 70S ribosome, L14 and L19 interact and together make contacts with the 16S rRNA in bridges B5 and B8.

Binds to 23S rRNA. Forms part of two intersubunit bridges in the 70S ribosome. The chain is Large ribosomal subunit protein uL14 from Clostridium botulinum (strain 657 / Type Ba4).